The following is a 171-amino-acid chain: MISQLRTLWIVLKHTFSRADTVQYPEQRPKLYPRYRGRIVLTRDPDGEERCVACNLCAAVCPVDCIALQKTEDVDGRWYPEFFRINFSRCILCGLCEEACPTYAIQLTPDFELCEYDRRNLVYEKEHLLIQGTGKYPGYSFYRVAGKAIAGKDKGQAENEAPPIDVHSLLP.

2 4Fe-4S ferredoxin-type domains span residues Leu-41–Thr-71 and Glu-81–Asp-110. [4Fe-4S] cluster-binding residues include Cys-51, Cys-54, Cys-57, Cys-61, Cys-90, Cys-93, Cys-96, and Cys-100.

The protein belongs to the complex I 23 kDa subunit family. NDH-1 is composed of 14 different subunits. Subunits NuoA, H, J, K, L, M, N constitute the membrane sector of the complex. The cofactor is [4Fe-4S] cluster.

Its subcellular location is the cell inner membrane. It catalyses the reaction a quinone + NADH + 5 H(+)(in) = a quinol + NAD(+) + 4 H(+)(out). Functionally, NDH-1 shuttles electrons from NADH, via FMN and iron-sulfur (Fe-S) centers, to quinones in the respiratory chain. The immediate electron acceptor for the enzyme in this species is believed to be ubiquinone. Couples the redox reaction to proton translocation (for every two electrons transferred, four hydrogen ions are translocated across the cytoplasmic membrane), and thus conserves the redox energy in a proton gradient. In Methylococcus capsulatus (strain ATCC 33009 / NCIMB 11132 / Bath), this protein is NADH-quinone oxidoreductase subunit I.